We begin with the raw amino-acid sequence, 220 residues long: Iron-sulfur cluster repair protein YtfE (220 aa).

Belongs to the RIC family. YtfE subfamily. As to quaternary structure, homodimer.

The protein resides in the cytoplasm. Di-iron-containing protein involved in the repair of iron-sulfur clusters damaged by oxidative and nitrosative stress conditions. The polypeptide is Iron-sulfur cluster repair protein YtfE (Escherichia coli O6:K15:H31 (strain 536 / UPEC)).